We begin with the raw amino-acid sequence, 207 residues long: Zinc finger protein 487 (207 aa).

In terms of domain architecture, KRAB spans 1-43 (MLENYSLLLSVGYCITKPEVVCKLEHGQVLWILEEESPSQSHL). The segment at 177-202 (KQCFEYNQCGKAFHEEAACSTHKRVC) adopts a C2H2-type; atypical zinc-finger fold.

The protein belongs to the krueppel C2H2-type zinc-finger protein family.

The protein localises to the nucleus. Functionally, may be involved in transcriptional regulation. The protein is Zinc finger protein 487 (ZNF487) of Homo sapiens (Human).